The following is a 282-amino-acid chain: Acetyl-coenzyme A carboxylase carboxyl transferase subunit beta (282 aa).

The 260-residue stretch at 23–282 (IWTKCGQCDA…MLSKLHHQQA (260 aa)) folds into the CoA carboxyltransferase N-terminal domain. Zn(2+) is bound by residues cysteine 27, cysteine 30, cysteine 46, and cysteine 49. A C4-type zinc finger spans residues 27–49 (CGQCDAVLYKTELEKQLGVCPKC).

The protein belongs to the AccD/PCCB family. As to quaternary structure, acetyl-CoA carboxylase is a heterohexamer composed of biotin carboxyl carrier protein (AccB), biotin carboxylase (AccC) and two subunits each of ACCase subunit alpha (AccA) and ACCase subunit beta (AccD). The cofactor is Zn(2+).

The protein localises to the cytoplasm. The catalysed reaction is N(6)-carboxybiotinyl-L-lysyl-[protein] + acetyl-CoA = N(6)-biotinyl-L-lysyl-[protein] + malonyl-CoA. Its pathway is lipid metabolism; malonyl-CoA biosynthesis; malonyl-CoA from acetyl-CoA: step 1/1. Functionally, component of the acetyl coenzyme A carboxylase (ACC) complex. Biotin carboxylase (BC) catalyzes the carboxylation of biotin on its carrier protein (BCCP) and then the CO(2) group is transferred by the transcarboxylase to acetyl-CoA to form malonyl-CoA. The chain is Acetyl-coenzyme A carboxylase carboxyl transferase subunit beta from Pseudoalteromonas atlantica (strain T6c / ATCC BAA-1087).